We begin with the raw amino-acid sequence, 228 residues long: Non-specific lipid-transfer protein EPAD1 (228 aa).

Positions 1 to 24 (MERSHLAVLLGLLAFAAGVPAAAA) are cleaved as a signal peptide. Disulfide bonds link cysteine 40–cysteine 62, cysteine 63–cysteine 105, and cysteine 78–cysteine 119. An N-linked (GlcNAc...) asparagine glycan is attached at asparagine 94. The disordered stretch occupies residues 124–207 (PPASIVTAPP…PPRSGASSSL (84 aa)). The segment covering 145 to 162 (REAPPPPPAAEKLSPPPQ) has biased composition (pro residues).

The protein belongs to the plant LTP family. Expressed in young panicles. Specifically expressed in pollen mother cells and young microspores.

It localises to the cell membrane. Functionally, plant non-specific lipid-transfer protein that binds phospholipids in vitro. Required for correct pollen exine patterning by controlling the continuity and homogeneity of the primexine distribution. The polypeptide is Non-specific lipid-transfer protein EPAD1 (Oryza sativa subsp. japonica (Rice)).